The sequence spans 453 residues: MSFDLIIKNGTVILENEARVIDIAVQGGKIAAIGENLGEAKNVLDATGLIVSPGMVDAHTHISEPGRTHWEGYETGTRAAAKGGITTMIEMPLNQLPATVDRETIELKFDAAKGKLTIDAAQLGGLVSYNLDRLHELDEVGVVGFKCFVATCGDRGIDNDFRDVNDWQFYKGAQKLGEMDQTVLVHCENALICDELGEEAKREGRVTAHDYVASRPVFTEVEAIRRVLYLAKAAGCRLHVCHISSPEGVEEVTRARQEGQDVTCESCPHYFVLDTDQFEEIGTLAKCSPPIRDQENQKGMWEKLFNGEIDCLVSDHSPCPPEMKAGNIMQAWGGIAGLQNCMDVMFDEAVQKRGMSLPMFGKLMATNAADIFGLKHKGRIAPGKDADLVFIQPDSSYVLKNEDLEYRHKVSPYVGRTIGARITKTILRGDVIYDIEHGFPVPPKGQFILKHQQ.

The Zn(2+) site is built by histidine 59, histidine 61, lysine 146, histidine 186, histidine 242, and aspartate 315. Position 146 is an N6-carboxylysine (lysine 146).

It belongs to the metallo-dependent hydrolases superfamily. Allantoinase family. In terms of assembly, homotetramer. It depends on Zn(2+) as a cofactor. Post-translationally, carboxylation allows a single lysine to coordinate two zinc ions.

The catalysed reaction is (S)-allantoin + H2O = allantoate + H(+). Its pathway is nitrogen metabolism; (S)-allantoin degradation; allantoate from (S)-allantoin: step 1/1. In terms of biological role, catalyzes the conversion of allantoin (5-ureidohydantoin) to allantoic acid by hydrolytic cleavage of the five-member hydantoin ring. The chain is Allantoinase from Salmonella agona (strain SL483).